We begin with the raw amino-acid sequence, 847 residues long: UPF0182 protein CYB_0372 (847 aa).

Transmembrane regions (helical) follow at residues 7–27 (GLFL…LAAF), 51–71 (WGLG…NICS), 76–96 (ATLA…AGSL), 141–161 (FNLV…ELGL), 168–188 (LALS…LFLI), 220–240 (LPAT…FWAL), and 259–279 (WASS…FGLL).

It belongs to the UPF0182 family.

Its subcellular location is the cell membrane. In Synechococcus sp. (strain JA-2-3B'a(2-13)) (Cyanobacteria bacterium Yellowstone B-Prime), this protein is UPF0182 protein CYB_0372.